The chain runs to 351 residues: Histidinol-phosphate aminotransferase (351 aa).

Position 215 is an N6-(pyridoxal phosphate)lysine (K215).

This sequence belongs to the class-II pyridoxal-phosphate-dependent aminotransferase family. Histidinol-phosphate aminotransferase subfamily. The cofactor is pyridoxal 5'-phosphate.

The catalysed reaction is L-histidinol phosphate + 2-oxoglutarate = 3-(imidazol-4-yl)-2-oxopropyl phosphate + L-glutamate. The protein operates within amino-acid biosynthesis; L-histidine biosynthesis; L-histidine from 5-phospho-alpha-D-ribose 1-diphosphate: step 7/9. The protein is Histidinol-phosphate aminotransferase of Methanocorpusculum labreanum (strain ATCC 43576 / DSM 4855 / Z).